Reading from the N-terminus, the 311-residue chain is Acetyl-coenzyme A carboxylase carboxyl transferase subunit alpha (311 aa).

Residues asparagine 36–glutamate 286 form the CoA carboxyltransferase C-terminal domain.

It belongs to the AccA family. As to quaternary structure, acetyl-CoA carboxylase is a heterohexamer composed of biotin carboxyl carrier protein (AccB), biotin carboxylase (AccC) and two subunits each of ACCase subunit alpha (AccA) and ACCase subunit beta (AccD).

It localises to the cytoplasm. It carries out the reaction N(6)-carboxybiotinyl-L-lysyl-[protein] + acetyl-CoA = N(6)-biotinyl-L-lysyl-[protein] + malonyl-CoA. Its pathway is lipid metabolism; malonyl-CoA biosynthesis; malonyl-CoA from acetyl-CoA: step 1/1. Functionally, component of the acetyl coenzyme A carboxylase (ACC) complex. First, biotin carboxylase catalyzes the carboxylation of biotin on its carrier protein (BCCP) and then the CO(2) group is transferred by the carboxyltransferase to acetyl-CoA to form malonyl-CoA. This is Acetyl-coenzyme A carboxylase carboxyl transferase subunit alpha from Campylobacter lari (strain RM2100 / D67 / ATCC BAA-1060).